A 480-amino-acid chain; its full sequence is Cytochrome c oxidase subunit 1 (480 aa).

Residues 22–42 (ISYLWLAYWFGMIGFYMSVLI) form a helical membrane-spanning segment. Residues E45 and G50 each contribute to the Ca(2+) site. Helical transmembrane passes span 64 to 84 (LLFT…GLFG), 109 to 129 (SLLL…LEIG), 151 to 171 (LIIF…INFI), 194 to 214 (IVLT…VFLM), 240 to 260 (LFWF…FGII), 278 to 298 (MILA…HHMY), 309 to 329 (YFTT…FNWV), and 343 to 363 (LILF…TGVV). H69 serves as a coordination point for Fe(II)-heme a. H246 contacts Cu cation. A cross-link (1'-histidyl-3'-tyrosine (His-Tyr)) is located at residues 246-250 (HPEVY). An O2-binding site is contributed by Y250. Cu cation contacts are provided by H295 and H296. Positions 374 and 375 each coordinate Mg(2+). H382 contacts heme a3. A run of 2 helical transmembrane segments spans residues 382–402 (HFHF…IVYI) and 416–436 (LSLM…PMHF). A Fe(II)-heme a-binding site is contributed by H384. Residue P447 coordinates Ca(2+). The chain crosses the membrane as a helical span at residues 458-478 (FICTLGATMMLVLKLTVLFII).

It belongs to the heme-copper respiratory oxidase family. In terms of assembly, component of the cytochrome c oxidase (complex IV, CIV), a multisubunit enzyme composed of a catalytic core of 3 subunits and several supernumerary subunits. The complex exists as a monomer or a dimer and forms supercomplexes (SCs) in the inner mitochondrial membrane with ubiquinol-cytochrome c oxidoreductase (cytochrome b-c1 complex, complex III, CIII). Requires heme as cofactor. The cofactor is Cu cation.

The protein resides in the mitochondrion inner membrane. The catalysed reaction is 4 Fe(II)-[cytochrome c] + O2 + 8 H(+)(in) = 4 Fe(III)-[cytochrome c] + 2 H2O + 4 H(+)(out). It functions in the pathway energy metabolism; oxidative phosphorylation. In terms of biological role, component of the cytochrome c oxidase, the last enzyme in the mitochondrial electron transport chain which drives oxidative phosphorylation. The respiratory chain contains 3 multisubunit complexes succinate dehydrogenase (complex II, CII), ubiquinol-cytochrome c oxidoreductase (cytochrome b-c1 complex, complex III, CIII) and cytochrome c oxidase (complex IV, CIV), that cooperate to transfer electrons derived from NADH and succinate to molecular oxygen, creating an electrochemical gradient over the inner membrane that drives transmembrane transport and the ATP synthase. Cytochrome c oxidase is the component of the respiratory chain that catalyzes the reduction of oxygen to water. Electrons originating from reduced cytochrome c in the intermembrane space (IMS) are transferred via the dinuclear copper A center (CU(A)) of subunit 2 and heme A of subunit 1 to the active site in subunit 1, a binuclear center (BNC) formed by heme A3 and copper B (CU(B)). The BNC reduces molecular oxygen to 2 water molecules using 4 electrons from cytochrome c in the IMS and 4 protons from the mitochondrial matrix. This chain is Cytochrome c oxidase subunit 1 (MT-CO1), found in Theileria annulata.